The following is a 900-amino-acid chain: Alanine--tRNA ligase (900 aa).

4 residues coordinate Zn(2+): His-604, His-608, Cys-708, and His-712.

The protein belongs to the class-II aminoacyl-tRNA synthetase family. Zn(2+) serves as cofactor.

Its subcellular location is the cytoplasm. The catalysed reaction is tRNA(Ala) + L-alanine + ATP = L-alanyl-tRNA(Ala) + AMP + diphosphate. Catalyzes the attachment of alanine to tRNA(Ala) in a two-step reaction: alanine is first activated by ATP to form Ala-AMP and then transferred to the acceptor end of tRNA(Ala). Also edits incorrectly charged Ser-tRNA(Ala) and Gly-tRNA(Ala) via its editing domain. The chain is Alanine--tRNA ligase from Saccharolobus islandicus (strain L.S.2.15 / Lassen #1) (Sulfolobus islandicus).